The primary structure comprises 327 residues: MVREKVKVSTRTLQWKCVESRRDSKRLYYGRFILSPLMKGQADTIGIAMRRALLGEMEGTCITRVKSENIPHDYSNIVGIQESVHEILMNLNEIVLRSNLYGTRNALICVQGPGYITARDIILPPSVEIVDNTQHIATLTEPIDLCIGLKIERNRGYSLKISNNLEDRSYPIDAVFMPVQNANHSIHSYGNGNEKQEILFLEIWTNGSLTPKEALHEASRNLINLFIPFLHVEEETFYLENNQHQVTLPFFPFHNRFFNLRKKKKELAFQYIFIDQLELPPRIYNCLKKSNIHTLLDLLNNSQEDLIKIEHFHVEDVKKILDILEKK.

The alpha N-terminal domain (alpha-NTD) stretch occupies residues 1–233 (MVREKVKVST…NLFIPFLHVE (233 aa)). Residues 267-327 (LAFQYIFIDQ…KKILDILEKK (61 aa)) form an alpha C-terminal domain (alpha-CTD) region.

The protein belongs to the RNA polymerase alpha chain family. As to quaternary structure, in plastids the minimal PEP RNA polymerase catalytic core is composed of four subunits: alpha, beta, beta', and beta''. When a (nuclear-encoded) sigma factor is associated with the core the holoenzyme is formed, which can initiate transcription.

It is found in the plastid. The protein localises to the chloroplast. The enzyme catalyses RNA(n) + a ribonucleoside 5'-triphosphate = RNA(n+1) + diphosphate. In terms of biological role, DNA-dependent RNA polymerase catalyzes the transcription of DNA into RNA using the four ribonucleoside triphosphates as substrates. The protein is DNA-directed RNA polymerase subunit alpha of Crucihimalaya wallichii (Rock-cress).